A 121-amino-acid chain; its full sequence is Holin-like protein CidA (121 aa).

Helical transmembrane passes span 3–23 (WWKL…GEWI), 30–50 (PVPG…FNLV), 58–78 (GADF…VAVI), and 89–109 (IDLI…TGLL).

This sequence belongs to the CidA/LrgA family. CidA subfamily.

It localises to the cell membrane. In terms of biological role, increases the activity of extracellular murein hydrolases possibly by mediating their export via hole formation. Inhibited by the antiholin-like proteins LrgAB. In an unstressed cell, the LrgAB products probably inhibit the function of the CidA protein. When a cell is stressed by the addition of antibiotics or by other factors in the environment, CidA possibly oligomerizes within the bacterial cell membrane, creating lesions that disrupt the proton motive force, which in turn results in loss of cell viability. These lesions are also hypothesized to regulate the subsequent cell lysis by either allowing the murein hydrolases access to the cell wall substrate and/or regulating their activity by a possible change in the cell wall pH that results from loss of membrane potential. This chain is Holin-like protein CidA, found in Bacillus cereus (strain ATCC 10987 / NRS 248).